The primary structure comprises 520 residues: ATP-dependent RNA helicase CshA (520 aa).

Residues Thr2 to Glu30 carry the Q motif motif. One can recognise a Helicase ATP-binding domain in the interval Ile33–Ile203. Position 46 to 53 (Ala46 to Thr53) interacts with ATP. The DEAD box motif lies at Asp151–Asp154. Residues Leu214–Ala374 enclose the Helicase C-terminal domain. A compositionally biased stretch (basic and acidic residues) spans Lys428 to Leu439. The interval Lys428–Lys520 is disordered. Gly residues-rich tracts occupy residues Arg442–Gly468 and Ser482–Gly496.

It belongs to the DEAD box helicase family. CshA subfamily. As to quaternary structure, oligomerizes, may be a member of the RNA degradosome.

Its subcellular location is the cytoplasm. The catalysed reaction is ATP + H2O = ADP + phosphate + H(+). Its function is as follows. DEAD-box RNA helicase possibly involved in RNA degradation. Unwinds dsRNA in both 5'- and 3'-directions, has RNA-dependent ATPase activity. Involved in cold tolerance, motility and alcohol tolerance. The chain is ATP-dependent RNA helicase CshA from Listeria monocytogenes serovar 1/2a (strain ATCC BAA-679 / EGD-e).